The sequence spans 155 residues: Transcriptional repressor NrdR (155 aa).

The segment at 3–34 is a zinc-finger region; that stretch reads CPFCSHFESKVVDSRPTDEGQAIRRRRECVSC. The region spanning 49–139 is the ATP-cone domain; sequence LIVVKKSGNR…VYREFKDINT (91 aa).

This sequence belongs to the NrdR family. It depends on Zn(2+) as a cofactor.

In terms of biological role, negatively regulates transcription of bacterial ribonucleotide reductase nrd genes and operons by binding to NrdR-boxes. The polypeptide is Transcriptional repressor NrdR (Alkaliphilus metalliredigens (strain QYMF)).